The sequence spans 576 residues: Arginine--tRNA ligase (576 aa).

A 'HIGH' region motif is present at residues 126–136 (ANPTGPMHIGH).

The protein belongs to the class-I aminoacyl-tRNA synthetase family. Monomer.

The protein resides in the cytoplasm. It catalyses the reaction tRNA(Arg) + L-arginine + ATP = L-arginyl-tRNA(Arg) + AMP + diphosphate. The chain is Arginine--tRNA ligase from Rickettsia felis (strain ATCC VR-1525 / URRWXCal2) (Rickettsia azadi).